Consider the following 235-residue polypeptide: Phosphoribosylaminoimidazole-succinocarboxamide synthase (235 aa).

It belongs to the SAICAR synthetase family.

It carries out the reaction 5-amino-1-(5-phospho-D-ribosyl)imidazole-4-carboxylate + L-aspartate + ATP = (2S)-2-[5-amino-1-(5-phospho-beta-D-ribosyl)imidazole-4-carboxamido]succinate + ADP + phosphate + 2 H(+). Its pathway is purine metabolism; IMP biosynthesis via de novo pathway; 5-amino-1-(5-phospho-D-ribosyl)imidazole-4-carboxamide from 5-amino-1-(5-phospho-D-ribosyl)imidazole-4-carboxylate: step 1/2. This Nautilia profundicola (strain ATCC BAA-1463 / DSM 18972 / AmH) protein is Phosphoribosylaminoimidazole-succinocarboxamide synthase.